The chain runs to 1060 residues: MPHLPLASFRPPLWGLRPSWGLSRPQALCTQPEPHGSPVSRRNREAKQKRLREKQAALEAGLAEKSKIPAVPTKAWSHKEVVLYEIPTGPGEKKDVSGPLPPAYSPQYVEAAWYQWWVREGFFKPEYQARLPQATGETFSMCIPPPNVTGSLHIGHALTVAIQDALVRWHRMRGDRVLWIPGSDHAGIATQAMVEKQLWKEQRVRRHELSREDFLRAVWQWKHEKGGEIYEQLCALGASLDWDRECFTMDAGSSAAVTEAFVRLYNSGLLYRNRQLVNWSCTLRSAISDIEVESRPLPGRTVLQLPGCPTPVSFGLLASVAFPVDGEPDTEIVVGTTRPETLPGDVAVAVHPDDPRYTHLHGRQLRHPLTGQLLPLITDTTVQPHVGTGAVKVTPAHSPIDAEIGTRHGLTPLSVIAEDGTMTSLCGDWLQGLHRFVAREKIMCTLREQGLFRGLQEHPMVLPICSRSGDVVEYLLKSQWFVRCQEMGDLAAKAVESGALELWPSFHQKSWQHWFAHIGDWCVSRQLWWGHQIPAYRVIGENAEDDRKECWVVGRSEAEARAVAAKRTGRPEAELTLERDPDVLDTWFSSALFPFSALGWPRETPDLAHFYPLTLLETGSDLLMFWVGRMVMLGTQLTGQLPFSKVLLHSMVRDRQGRKMSKSLGNVLDPRDIISGQELQVLQAKLRDGNLDPGELAVAAAAQKKDFPYGIPECGTDALRFALCSHGILGGDLHLSVSEVLNYRHFCNKLWNALRFVLRALGDNFVPQPAEEVTPSSPMDAWILSRLAFAASECERGFLSRELSLVTHTLYHFWLHNLCDVYLEAVKPVLSSVPRPPGPPQVLFSCADVGLRLLAPLMPFLAEELWQRLPPRPGGPLAPSICVAPYPSTRSLEFWRQPELERCFSRVQEVVQALRALRATYQLTKARPQVLLQCSDPGEQGLVQPFLEPLGILSHCGAVGFLSPGAAAPSGWALTPLGDTMKIYMELQGLVDPQSQLPRLTARRQKLQKQLDDLLNRTMSEGLAERQQRISSLHLELSKLDQAASYLQQLMDEAPSAREL.

The N-terminal 15 residues, 1–15 (MPHLPLASFRPPLWG), are a transit peptide targeting the mitochondrion. Positions 25–50 (PQALCTQPEPHGSPVSRRNREAKQKR) are disordered. The 'HIGH' region motif lies at 146-156 (PNVTGSLHIGH). An N6-acetyllysine modification is found at lysine 548. The 'KMSKS' region signature appears at 659–663 (KMSKS). Lysine 662 provides a ligand contact to ATP.

The protein belongs to the class-I aminoacyl-tRNA synthetase family.

Its subcellular location is the mitochondrion. The catalysed reaction is tRNA(Val) + L-valine + ATP = L-valyl-tRNA(Val) + AMP + diphosphate. In terms of biological role, catalyzes the attachment of valine to tRNA(Val) in a two-step reaction: valine is first activated by ATP to form Val-AMP and then transferred to the acceptor end of tRNA(Val). In Mus musculus (Mouse), this protein is Valine--tRNA ligase, mitochondrial (Vars2).